The primary structure comprises 445 residues: Signal recognition particle 54 kDa protein (445 aa).

Residues 106–113 (GLQGSGKT), 186–190 (DTAGR), and 244–247 (TKLD) contribute to the GTP site.

The protein belongs to the GTP-binding SRP family. SRP54 subfamily. In terms of assembly, part of the signal recognition particle protein translocation system, which is composed of SRP and FtsY. Archaeal SRP consists of a 7S RNA molecule of 300 nucleotides and two protein subunits: SRP54 and SRP19.

The protein localises to the cytoplasm. The catalysed reaction is GTP + H2O = GDP + phosphate + H(+). Functionally, involved in targeting and insertion of nascent membrane proteins into the cytoplasmic membrane. Binds to the hydrophobic signal sequence of the ribosome-nascent chain (RNC) as it emerges from the ribosomes. The SRP-RNC complex is then targeted to the cytoplasmic membrane where it interacts with the SRP receptor FtsY. The protein is Signal recognition particle 54 kDa protein of Methanobrevibacter smithii (strain ATCC 35061 / DSM 861 / OCM 144 / PS).